Here is a 455-residue protein sequence, read N- to C-terminus: MDETQGPLAMTVHLLANSGHGSLLQRTLDQLLDCICPEVRLFQVSERASPVKYCEKSHSKRSRFPGMSVLLFLHESPGEDRLFRVLDSLQHSPWQCYPTQDTRGRLCPYFFANQEFYSLDSQLPIWGVRQVHCGSEILRVTLYCSFDNYEDAIRLYEMILQREATLQKSNFCFFVLYASKSFALQLSLKQLPPGMSVDPKESSVLQFKVQEIGQLVPLLPNPCMPISSTRWQTQDYDGNKILLQVQLNPELGVKNGILGAGMLPLGSRLTSVSAKRTSEPRSQRNQGKRSQGHSLELPEPSGSPTSDRCAGTSWKSPGRSFQVSSPAMGAHLHLSSHHLESGARMKVLNRENSFQKLEAETNVDTGLTIINSEPRQTYFGGFPRDLQTSQPPFCLPASSLGVATSKNNSVLKERVSPLPLAGQRDLGTRKTISECLLHLQVQGEEKEEDEEEFFI.

Ser49 carries the phosphoserine modification. The interval 270-322 (TSVSAKRTSEPRSQRNQGKRSQGHSLELPEPSGSPTSDRCAGTSWKSPGRSFQ) is disordered. Positions 313-322 (SWKSPGRSFQ) are enriched in polar residues.

Belongs to the FAM124 family. In terms of assembly, interacts with CHD7 and CHD8.

The protein resides in the nucleus. The sequence is that of Protein FAM124B (FAM124B) from Homo sapiens (Human).